A 128-amino-acid polypeptide reads, in one-letter code: Large ribosomal subunit protein bL12 (128 aa).

It belongs to the bacterial ribosomal protein bL12 family. In terms of assembly, homodimer. Part of the ribosomal stalk of the 50S ribosomal subunit. Forms a multimeric L10(L12)X complex, where L10 forms an elongated spine to which 2 to 4 L12 dimers bind in a sequential fashion. Binds GTP-bound translation factors.

In terms of biological role, forms part of the ribosomal stalk which helps the ribosome interact with GTP-bound translation factors. Is thus essential for accurate translation. The polypeptide is Large ribosomal subunit protein bL12 (Saccharopolyspora erythraea (strain ATCC 11635 / DSM 40517 / JCM 4748 / NBRC 13426 / NCIMB 8594 / NRRL 2338)).